The sequence spans 457 residues: Peptidyl-prolyl cis-trans isomerase FKBP5 (457 aa).

N-acetylmethionine is present on methionine 1. Residues methionine 1–glutamate 11 show a composition bias toward basic and acidic residues. Residues methionine 1–aspartate 24 are disordered. Serine 13 bears the Phosphoserine mark. At lysine 28 the chain carries N6-acetyllysine. One can recognise a PPIase FKBP-type 1 domain in the interval asparagine 42–phenylalanine 130. Residue lysine 155 is modified to N6-acetyllysine. Residues glutamate 157–tyrosine 243 enclose the PPIase FKBP-type 2 domain. TPR repeat units lie at residues alanine 268–glutamate 301, leucine 317–asparagine 350, and glutamate 351–asparagine 384. The disordered stretch occupies residues aspartate 420–valine 457. A Phosphoserine modification is found at serine 445.

As to quaternary structure, part of a heteromultimeric cytoplasmic complex with HSP90AA1, HSPA1A/HSPA1B and steroid receptors. Upon ligand binding dissociates from the complex and FKBP4 takes its place. Interacts with functionally mature heterooligomeric progesterone receptor complexes along with HSP90 and TEBP. Interacts with NR3C1. Interacts with Akt/AKT1 and PHLPP1; enhancing dephosphorylation and subsequent activation of Akt/AKT1. Interacts with IFI44L; this interaction modulates the kinase activity of IKBKB and IKBKE. Interacts with IKBKB and IKBKE. Post-translationally, acetylation impairs ability to promote interaction between Akt/AKT1 and PHLPP1. Deacetylation by SIRT7 promotes interaction between Akt/AKT1 and PHLPP1, leading to suppress Akt/AKT1 activation. In terms of processing, ubiquitinated, leading to degradation in a proteasome-dependent manner. Deubiquitinated by USP49, leading to stabilization. Widely expressed, enriched in testis compared to other tissues.

It localises to the cytoplasm. It is found in the nucleus. It carries out the reaction [protein]-peptidylproline (omega=180) = [protein]-peptidylproline (omega=0). Its activity is regulated as follows. Inhibited by both FK506 and rapamycin. Immunophilin protein with PPIase and co-chaperone activities. Component of unligated steroid receptors heterocomplexes through interaction with heat-shock protein 90 (HSP90). Plays a role in the intracellular trafficking of heterooligomeric forms of steroid hormone receptors maintaining the complex into the cytoplasm when unliganded. Acts as a regulator of Akt/AKT1 activity by promoting the interaction between Akt/AKT1 and PHLPP1, thereby enhancing dephosphorylation and subsequent activation of Akt/AKT1. Interacts with IKBKE and IKBKB which facilitates IKK complex assembly leading to increased IKBKE and IKBKB kinase activity, NF-kappa-B activation, and IFN production. The polypeptide is Peptidyl-prolyl cis-trans isomerase FKBP5 (FKBP5) (Homo sapiens (Human)).